Consider the following 427-residue polypeptide: F-box protein At2g16450 (427 aa).

Residues M1–L45 form the F-box domain.

The polypeptide is F-box protein At2g16450 (Arabidopsis thaliana (Mouse-ear cress)).